Here is a 144-residue protein sequence, read N- to C-terminus: 3-dehydroquinate dehydratase (144 aa).

The Proton acceptor role is filled by tyrosine 22. 3 residues coordinate substrate: asparagine 73, histidine 79, and aspartate 86. Catalysis depends on histidine 99, which acts as the Proton donor. Residues 100–101 (LS) and arginine 110 contribute to the substrate site.

This sequence belongs to the type-II 3-dehydroquinase family. In terms of assembly, homododecamer.

The enzyme catalyses 3-dehydroquinate = 3-dehydroshikimate + H2O. The protein operates within metabolic intermediate biosynthesis; chorismate biosynthesis; chorismate from D-erythrose 4-phosphate and phosphoenolpyruvate: step 3/7. Its function is as follows. Catalyzes a trans-dehydration via an enolate intermediate. The chain is 3-dehydroquinate dehydratase from Pelotomaculum thermopropionicum (strain DSM 13744 / JCM 10971 / SI).